Reading from the N-terminus, the 305-residue chain is Tyrosine recombinase XerC (305 aa).

One can recognise a Core-binding (CB) domain in the interval 4-95; the sequence is TSIQELINKW…AVKNFYKFLE (92 aa). A Tyr recombinase domain is found at 116 to 298; it reads LLPKSLSEDD…SIKHLVSVYT (183 aa). Active-site residues include arginine 159, lysine 182, histidine 250, arginine 253, and histidine 276. Tyrosine 285 functions as the O-(3'-phospho-DNA)-tyrosine intermediate in the catalytic mechanism.

Belongs to the 'phage' integrase family. XerC subfamily. As to quaternary structure, forms a cyclic heterotetrameric complex composed of two molecules of XerC and two molecules of XerD.

The protein localises to the cytoplasm. Its function is as follows. Site-specific tyrosine recombinase, which acts by catalyzing the cutting and rejoining of the recombining DNA molecules. The XerC-XerD complex is essential to convert dimers of the bacterial chromosome into monomers to permit their segregation at cell division. It also contributes to the segregational stability of plasmids. The protein is Tyrosine recombinase XerC of Rickettsia canadensis (strain McKiel).